A 445-amino-acid chain; its full sequence is RNA pseudouridine synthase 2, chloroplastic (445 aa).

The N-terminal 44 residues, 1–44, are a transit peptide targeting the chloroplast; sequence MATTAAASPPAIATALSALLRRQRRRSSRCVGASHARCLAADAN. Positions 47-66 are disordered; the sequence is AVAPSRRGGHGGTRLEEAVP. The region spanning 72 to 147 is the S4 RNA-binding domain; sequence SRIDAWISAR…IPLDIVYEDD (76 aa). The active site involves Asp235.

The protein belongs to the pseudouridine synthase RluA family.

It localises to the plastid. Its subcellular location is the chloroplast. The catalysed reaction is a uridine in RNA = a pseudouridine in RNA. This chain is RNA pseudouridine synthase 2, chloroplastic, found in Oryza sativa subsp. japonica (Rice).